Here is an 883-residue protein sequence, read N- to C-terminus: Phosphoenolpyruvate carboxylase (883 aa).

Residues H138 and K546 contribute to the active site.

It belongs to the PEPCase type 1 family. It depends on Mg(2+) as a cofactor.

It carries out the reaction oxaloacetate + phosphate = phosphoenolpyruvate + hydrogencarbonate. Forms oxaloacetate, a four-carbon dicarboxylic acid source for the tricarboxylic acid cycle. This chain is Phosphoenolpyruvate carboxylase, found in Escherichia coli O45:K1 (strain S88 / ExPEC).